Consider the following 218-residue polypeptide: Small ribosomal subunit protein uS3c (218 aa).

The KH type-2 domain maps to 47–118; sequence VQKNIRISSG…KLNIAITRIS (72 aa).

It belongs to the universal ribosomal protein uS3 family. In terms of assembly, part of the 30S ribosomal subunit.

The protein resides in the plastid. Its subcellular location is the chloroplast. The sequence is that of Small ribosomal subunit protein uS3c (rps3) from Arabis hirsuta (Hairy rock-cress).